A 381-amino-acid polypeptide reads, in one-letter code: Succinyl-diaminopimelate desuccinylase (381 aa).

Residue H71 coordinates Zn(2+). D73 is an active-site residue. D104 serves as a coordination point for Zn(2+). Catalysis depends on E136, which acts as the Proton acceptor. Zn(2+)-binding residues include E137, E166, and H351.

The protein belongs to the peptidase M20A family. DapE subfamily. As to quaternary structure, homodimer. Requires Zn(2+) as cofactor. It depends on Co(2+) as a cofactor.

The enzyme catalyses N-succinyl-(2S,6S)-2,6-diaminopimelate + H2O = (2S,6S)-2,6-diaminopimelate + succinate. It participates in amino-acid biosynthesis; L-lysine biosynthesis via DAP pathway; LL-2,6-diaminopimelate from (S)-tetrahydrodipicolinate (succinylase route): step 3/3. Its function is as follows. Catalyzes the hydrolysis of N-succinyl-L,L-diaminopimelic acid (SDAP), forming succinate and LL-2,6-diaminopimelate (DAP), an intermediate involved in the bacterial biosynthesis of lysine and meso-diaminopimelic acid, an essential component of bacterial cell walls. The sequence is that of Succinyl-diaminopimelate desuccinylase from Ehrlichia chaffeensis (strain ATCC CRL-10679 / Arkansas).